The chain runs to 668 residues: UvrABC system protein B (668 aa).

The 387-residue stretch at 27–413 (AGVQAGHRFQ…STQVVEQIIR (387 aa)) folds into the Helicase ATP-binding domain. 40–47 (GATGTGKT) provides a ligand contact to ATP. The Beta-hairpin signature appears at 93–116 (YYDYYQPEAYIPVTDTYIEKSASI). Positions 430-596 (QVDDLYGEIR…PIVKKTSNAI (167 aa)) constitute a Helicase C-terminal domain. Residues 628–663 (PPLIQDLEAKMKAAAQELAFEEAARYRDQIKRLRDR) form the UVR domain.

This sequence belongs to the UvrB family. In terms of assembly, forms a heterotetramer with UvrA during the search for lesions. Interacts with UvrC in an incision complex.

Its subcellular location is the cytoplasm. Its function is as follows. The UvrABC repair system catalyzes the recognition and processing of DNA lesions. A damage recognition complex composed of 2 UvrA and 2 UvrB subunits scans DNA for abnormalities. Upon binding of the UvrA(2)B(2) complex to a putative damaged site, the DNA wraps around one UvrB monomer. DNA wrap is dependent on ATP binding by UvrB and probably causes local melting of the DNA helix, facilitating insertion of UvrB beta-hairpin between the DNA strands. Then UvrB probes one DNA strand for the presence of a lesion. If a lesion is found the UvrA subunits dissociate and the UvrB-DNA preincision complex is formed. This complex is subsequently bound by UvrC and the second UvrB is released. If no lesion is found, the DNA wraps around the other UvrB subunit that will check the other stand for damage. This is UvrABC system protein B from Thermosynechococcus vestitus (strain NIES-2133 / IAM M-273 / BP-1).